The following is a 193-amino-acid chain: Holliday junction branch migration complex subunit RuvA (193 aa).

A domain I region spans residues 1-63; it reads MIHHLKGQLI…EDSHTLYGFA (63 aa). The domain II stretch occupies residues 64-142; that stretch reads EKSEREIFRL…KVLGDDEVFV (79 aa). Positions 143 to 145 are flexible linker; sequence SQS. The interval 145-193 is domain III; the sequence is SNTNKEEALSALEILGYNRRQAGKVVEKILKEDPESTVESIIKMALKKL.

It belongs to the RuvA family. Homotetramer. Forms an RuvA(8)-RuvB(12)-Holliday junction (HJ) complex. HJ DNA is sandwiched between 2 RuvA tetramers; dsDNA enters through RuvA and exits via RuvB. An RuvB hexamer assembles on each DNA strand where it exits the tetramer. Each RuvB hexamer is contacted by two RuvA subunits (via domain III) on 2 adjacent RuvB subunits; this complex drives branch migration. In the full resolvosome a probable DNA-RuvA(4)-RuvB(12)-RuvC(2) complex forms which resolves the HJ.

It localises to the cytoplasm. Its function is as follows. The RuvA-RuvB-RuvC complex processes Holliday junction (HJ) DNA during genetic recombination and DNA repair, while the RuvA-RuvB complex plays an important role in the rescue of blocked DNA replication forks via replication fork reversal (RFR). RuvA specifically binds to HJ cruciform DNA, conferring on it an open structure. The RuvB hexamer acts as an ATP-dependent pump, pulling dsDNA into and through the RuvAB complex. HJ branch migration allows RuvC to scan DNA until it finds its consensus sequence, where it cleaves and resolves the cruciform DNA. The chain is Holliday junction branch migration complex subunit RuvA from Christiangramia forsetii (strain DSM 17595 / CGMCC 1.15422 / KT0803) (Gramella forsetii).